The primary structure comprises 70 residues: MSKVMIFLIKFYQKAISPYLGQGKCKYYPTCSQYALEAFKKKPFFKALGLTIWRILRCNPFSKGGYDPLK.

It belongs to the UPF0161 family.

It localises to the cell membrane. Its function is as follows. Could be involved in insertion of integral membrane proteins into the membrane. This Finegoldia magna (strain ATCC 29328 / DSM 20472 / WAL 2508) (Peptostreptococcus magnus) protein is Putative membrane protein insertion efficiency factor.